The sequence spans 170 residues: MRLVVGRIGRPHGVKGEVTVEVRTDSPEERFVVGKALETDPADVGPLTITAQRWHKDRLLVRFEEVPDRTAAEQLRGVFLVVDSAELPPLDDPDEFHDHELIGLRVETVDGEAVGEVVDVLHHAQDMLVVSGEKGSEVLVPFVRELVPDVDTAAGRVVIDPPPGLLELGR.

The PRC barrel domain occupies 93-165; that stretch reads PDEFHDHELI…RVVIDPPPGL (73 aa).

This sequence belongs to the RimM family. As to quaternary structure, binds ribosomal protein uS19.

The protein localises to the cytoplasm. Functionally, an accessory protein needed during the final step in the assembly of 30S ribosomal subunit, possibly for assembly of the head region. Essential for efficient processing of 16S rRNA. May be needed both before and after RbfA during the maturation of 16S rRNA. It has affinity for free ribosomal 30S subunits but not for 70S ribosomes. This is Ribosome maturation factor RimM from Thermobifida fusca (strain YX).